We begin with the raw amino-acid sequence, 348 residues long: Dihydroorotase (348 aa).

His-17 and His-19 together coordinate Zn(2+). Residues 19-21 (HLR) and Asn-45 contribute to the substrate site. Residues Lys-103, His-140, and His-178 each contribute to the Zn(2+) site. Residue Lys-103 is modified to N6-carboxylysine. His-140 serves as a coordination point for substrate. Substrate is bound at residue Leu-223. Asp-251 is a Zn(2+) binding site. Asp-251 is a catalytic residue. Positions 255 and 267 each coordinate substrate.

The protein belongs to the metallo-dependent hydrolases superfamily. DHOase family. Class II DHOase subfamily. Homodimer. It depends on Zn(2+) as a cofactor.

The enzyme catalyses (S)-dihydroorotate + H2O = N-carbamoyl-L-aspartate + H(+). It functions in the pathway pyrimidine metabolism; UMP biosynthesis via de novo pathway; (S)-dihydroorotate from bicarbonate: step 3/3. Catalyzes the reversible cyclization of carbamoyl aspartate to dihydroorotate. The polypeptide is Dihydroorotase (Shigella dysenteriae serotype 1 (strain Sd197)).